A 372-amino-acid polypeptide reads, in one-letter code: Fatty acid 2-hydroxylase (372 aa).

Residues Ala-8–Arg-86 form the Cytochrome b5 heme-binding domain. 2 residues coordinate heme: His-43 and His-69. The next 2 membrane-spanning stretches (helical) occupy residues Val-168–Tyr-188 and Ser-213–Ile-233. The region spanning Phe-219–Thr-361 is the Fatty acid hydroxylase domain. Zn(2+) contacts are provided by His-234, His-239, His-257, His-260, and His-261. Transmembrane regions (helical) follow at residues Val-271–Ile-291 and Leu-292–Asp-312. Residues His-315, His-319, His-336, His-339, and His-340 each coordinate Zn(2+).

The protein belongs to the sterol desaturase family. SCS7 subfamily. Requires Zn(2+) as cofactor.

The protein resides in the endoplasmic reticulum membrane. The protein localises to the microsome membrane. It carries out the reaction a 1,2-saturated fatty acid + 2 Fe(II)-[cytochrome b5] + O2 + 2 H(+) = a (R)-2-hydroxy fatty acid + 2 Fe(III)-[cytochrome b5] + H2O. The enzyme catalyses hexadecanoate + 2 Fe(II)-[cytochrome b5] + O2 + 2 H(+) = (R)-2-hydroxyhexadecanoate + 2 Fe(III)-[cytochrome b5] + H2O. It catalyses the reaction octadecanoate + 2 Fe(II)-[cytochrome b5] + O2 + 2 H(+) = (R)-2-hydroxyoctadecanoate + 2 Fe(III)-[cytochrome b5] + H2O. The catalysed reaction is docosanoate + 2 Fe(II)-[cytochrome b5] + O2 + 2 H(+) = 2-hydroxydocosanoate + 2 Fe(III)-[cytochrome b5] + H2O. It carries out the reaction tetracosanoate + 2 Fe(II)-[cytochrome b5] + O2 + 2 H(+) = (R)-2-hydroxytetracosanoate + 2 Fe(III)-[cytochrome b5] + H2O. It functions in the pathway lipid metabolism; fatty acid metabolism. The protein operates within sphingolipid metabolism; galactosylceramide biosynthesis. Functionally, catalyzes the hydroxylation of free fatty acids at the C-2 position to produce 2-hydroxy fatty acids, which are building blocks of sphingolipids and glycosphingolipids common in neural tissue and epidermis. FA2H is stereospecific for the production of (R)-2-hydroxy fatty acids. Plays an essential role in the synthesis of galactosphingolipids of the myelin sheath. Responsible for the synthesis of sphingolipids and glycosphingolipids involved in the formation of epidermal lamellar bodies critical for skin permeability barrier. Participates in the synthesis of glycosphingolipids and a fraction of type II wax diesters in sebaceous gland, specifically regulating hair follicle homeostasis. Involved in the synthesis of sphingolipids of plasma membrane rafts, controlling lipid raft mobility and trafficking of raft-associated proteins. The polypeptide is Fatty acid 2-hydroxylase (FA2H) (Macaca fascicularis (Crab-eating macaque)).